The primary structure comprises 60 residues: MTKGKKTAKYKYYKIEGDKVIRLKKTCPRCGPGVFMAEHLNRYACGKCGYMEWKQPQKKE.

The Zn(2+) site is built by C27, C30, C45, and C48. Residues 27–48 form a C4-type zinc finger; it reads CPRCGPGVFMAEHLNRYACGKC.

This sequence belongs to the eukaryotic ribosomal protein eS31 family. In terms of assembly, part of the 30S ribosomal subunit. Requires Zn(2+) as cofactor.

The sequence is that of Small ribosomal subunit protein eS31 from Methanocaldococcus jannaschii (strain ATCC 43067 / DSM 2661 / JAL-1 / JCM 10045 / NBRC 100440) (Methanococcus jannaschii).